The chain runs to 92 residues: Small integral membrane protein 12 (92 aa).

Residues 15–34 traverse the membrane as a helical segment; that stretch reads YVTFPVAFVVGAVGYHLEWF.

Belongs to the SMIM12 family.

Its subcellular location is the membrane. This Mus musculus (Mouse) protein is Small integral membrane protein 12 (Smim12).